We begin with the raw amino-acid sequence, 158 residues long: Transcription elongation factor GreA (158 aa).

This sequence belongs to the GreA/GreB family.

In terms of biological role, necessary for efficient RNA polymerase transcription elongation past template-encoded arresting sites. The arresting sites in DNA have the property of trapping a certain fraction of elongating RNA polymerases that pass through, resulting in locked ternary complexes. Cleavage of the nascent transcript by cleavage factors such as GreA or GreB allows the resumption of elongation from the new 3'terminus. GreA releases sequences of 2 to 3 nucleotides. The protein is Transcription elongation factor GreA of Ruthia magnifica subsp. Calyptogena magnifica.